The primary structure comprises 193 residues: Pyridoxal 5'-phosphate synthase subunit PdxT (193 aa).

G48–S50 contacts L-glutamine. Catalysis depends on C80, which acts as the Nucleophile. Residues R109 and I137 to R138 each bind L-glutamine. Residues H173 and E175 each act as charge relay system in the active site.

This sequence belongs to the glutaminase PdxT/SNO family. In the presence of PdxS, forms a dodecamer of heterodimers. Only shows activity in the heterodimer.

It carries out the reaction aldehydo-D-ribose 5-phosphate + D-glyceraldehyde 3-phosphate + L-glutamine = pyridoxal 5'-phosphate + L-glutamate + phosphate + 3 H2O + H(+). The enzyme catalyses L-glutamine + H2O = L-glutamate + NH4(+). The protein operates within cofactor biosynthesis; pyridoxal 5'-phosphate biosynthesis. Functionally, catalyzes the hydrolysis of glutamine to glutamate and ammonia as part of the biosynthesis of pyridoxal 5'-phosphate. The resulting ammonia molecule is channeled to the active site of PdxS. In Mycobacteroides abscessus (strain ATCC 19977 / DSM 44196 / CCUG 20993 / CIP 104536 / JCM 13569 / NCTC 13031 / TMC 1543 / L948) (Mycobacterium abscessus), this protein is Pyridoxal 5'-phosphate synthase subunit PdxT.